We begin with the raw amino-acid sequence, 1338 residues long: Protein dispatched homolog 3 (1338 aa).

Residues Met-1–Cys-67 lie on the Cytoplasmic side of the membrane. A helical membrane pass occupies residues Ala-68 to Leu-88. Residues His-89–Asp-406 lie on the Lumenal side of the membrane. Residues Thr-164 to Gly-196 form a disordered region. One can recognise an SSD domain in the interval Arg-401–Ile-559. A helical membrane pass occupies residues Met-407 to Cys-427. Ser-428 is a topological domain (cytoplasmic). A helical transmembrane segment spans residues Val-429 to Leu-449. Residues Tyr-450–Val-452 are Lumenal-facing. Residues Val-453–Ile-473 traverse the membrane as a helical segment. Residues Gly-474 to Ala-517 are Cytoplasmic-facing. A helical transmembrane segment spans residues Ala-518–Met-538. Ser-539 is a topological domain (lumenal). Residues Leu-540 to Trp-560 form a helical membrane-spanning segment. The Cytoplasmic segment spans residues Thr-561 to Arg-672. A helical membrane pass occupies residues Trp-673–Leu-693. Over Arg-694 to Ser-1128 the chain is Lumenal. Residues Ser-747 to Thr-768 are disordered. The chain crosses the membrane as a helical span at residues Ala-1129–Thr-1149. Residue His-1150 is a topological domain, cytoplasmic. Residues Ile-1151–Ile-1171 traverse the membrane as a helical segment. The Lumenal segment spans residues Met-1172 to Val-1237. Residues Ala-1238–Ile-1258 traverse the membrane as a helical segment. Residues Ala-1259–Lys-1266 are Cytoplasmic-facing. The chain crosses the membrane as a helical span at residues Ile-1267 to Leu-1287. At Ser-1288–Cys-1302 the chain is on the lumenal side. The helical transmembrane segment at Leu-1303–Leu-1323 threads the bilayer. Topologically, residues Leu-1324–Leu-1338 are cytoplasmic.

The protein belongs to the patched family. Expressed in retina, hippocampus and cerebellum. Expressed in the ganglion and bipolar cells of the inner and outer nuclear layers of the retina and in Purkinje cells (at protein level). Expressed strongly in brain and retina, weakly in testis and bone marrow.

It localises to the endoplasmic reticulum membrane. The protein localises to the nucleus membrane. Its subcellular location is the cytoplasmic vesicle membrane. Its function is as follows. Plays a role in neuronal proliferation and differentiation. Plays a role in the accumulation of cellular cholesterol. Involved in intracellular lipid droplet formation. May contribute to cholesterol homeostasis in neuronal cells. This chain is Protein dispatched homolog 3, found in Gallus gallus (Chicken).